A 465-amino-acid chain; its full sequence is MAKRREKRGRRRQHRSHRKIQRIIDGADFINYMPDDILHHILSFIPTDLAMRTSVLSRRWRHVWCETPCLDIKLKHGETNQTLTSYTAPIITSFKLVMDLNDNTVPQVDSWIEFALSRNVQNLSVFVRDFTYTKTYRFPDIFYISSSLKQLDVTLDFFDMIPTCAVSWKSLRNLTLRFCQIPDESMHNILSGCPILESLTLDTCRLLERLDLSKSPNLRRLDINRQYRRTGPIAIVAPHIYYLRLTYSSTPSTIVDVSSLSEANLNIISDRLLSPLTADRYQTMALEMLSKFHNVKRLTVGETILQILSLAELRGVPFPTLKVQTLTVKTEFVRSVIPGISRLLQNSPGLKKLTLHTLQLSHDIMEMHPLKGLYPDQCWRSTCEVFPTSKEIYKMLGCNDATSKLVASFMNLVLRNAKTLERMVVWLGGIYFNGDAPWFEEELFDMVETLSHNNNVSILLKQSNC.

Residues 27-73 (ADFINYMPDDILHHILSFIPTDLAMRTSVLSRRWRHVWCETPCLDIK) enclose the F-box domain. LRR repeat units follow at residues 127 to 155 (VRDFTYTKTYRFPDIFYISSSLKQLDVTL), 178 to 203 (FCQIPDESMHNILSGCPILESLTLDT), 207 to 225 (LERLDLSKSPNLRRLDINR), 278 to 302 (ADRYQTMALEMLSKFHNVKRLTVGE), 332 to 357 (FVRSVIPGISRLLQNSPGLKKLTLHT), 402 to 427 (TSKLVASFMNLVLRNAKTLERMVVWL), and 447 to 465 (VETLSHNNNVSILLKQSNC).

This chain is Putative F-box/LRR-repeat protein At3g28410, found in Arabidopsis thaliana (Mouse-ear cress).